A 498-amino-acid polypeptide reads, in one-letter code: L-amino acid oxidase (498 aa).

A signal peptide spans 1-11; it reads SLLFLAAVGSC. A disulfide bond links C21 and C184. FAD contacts are provided by residues 54 to 55, 74 to 75, 74 to 78, R82, and 98 to 101; these read MS, EA, EASER, and GPMR. Residue R101 coordinates substrate. N183 is a glycosylation site (N-linked (GlcNAc...) asparagine). Position 234 (H234) interacts with substrate. Position 272 (V272) interacts with FAD. A disulfide bridge links C342 with C423. A substrate-binding site is contributed by Y383. FAD-binding positions include E468, 475 to 480, and 476 to 480; these read GWIDST and WIDST. 475 to 476 contributes to the substrate binding site; it reads GW.

It belongs to the flavin monoamine oxidase family. FIG1 subfamily. As to quaternary structure, homodimer; non-covalently linked. It depends on FAD as a cofactor. N-glycosylated. Contains 18.73% carbohydrates. Expressed by the venom gland.

Its subcellular location is the secreted. It carries out the reaction an L-alpha-amino acid + O2 + H2O = a 2-oxocarboxylate + H2O2 + NH4(+). The enzyme catalyses L-leucine + O2 + H2O = 4-methyl-2-oxopentanoate + H2O2 + NH4(+). Strongly inhibited by glutathione, and moderately inhibited by PMSF, acetate iodine and glutamic acid. Is also inhibited by Zn(2+) ions, but not by Ca(2+), Mg(2+) and Mn(2+). In terms of biological role, catalyzes an oxidative deamination of predominantly hydrophobic and aromatic L-amino acids, thus producing hydrogen peroxide that may contribute to the diverse toxic effects of this enzyme. This enzyme shows activity on L-Leu. This enzyme inhibits platelet aggregation in human platelet rich plasma induced by ADP (IC(50)=3.2 mg/mL), and shows antibacterial activities on both Gram-positive and Gram-negative bacteria (P.aeruginosa, V.cholerae, S.aureus, E.faecalis and E.coli). These two effects are due to hydrogen peroxide, since they are inhibited by catalase. It also induces edema in mouse paw pads but does not show hemolytic activity. This protein may also have activities in hemorrhage, and apoptosis. This chain is L-amino acid oxidase, found in Bothrops pictus (Desert lancehead).